The chain runs to 301 residues: 4-hydroxy-tetrahydrodipicolinate synthase (301 aa).

Thr53 contributes to the pyruvate binding site. Tyr142 serves as the catalytic Proton donor/acceptor. Catalysis depends on Lys170, which acts as the Schiff-base intermediate with substrate. Position 212 (Val212) interacts with pyruvate.

Belongs to the DapA family. Homotetramer; dimer of dimers.

The protein localises to the cytoplasm. It carries out the reaction L-aspartate 4-semialdehyde + pyruvate = (2S,4S)-4-hydroxy-2,3,4,5-tetrahydrodipicolinate + H2O + H(+). Its pathway is amino-acid biosynthesis; L-lysine biosynthesis via DAP pathway; (S)-tetrahydrodipicolinate from L-aspartate: step 3/4. Catalyzes the condensation of (S)-aspartate-beta-semialdehyde [(S)-ASA] and pyruvate to 4-hydroxy-tetrahydrodipicolinate (HTPA). The sequence is that of 4-hydroxy-tetrahydrodipicolinate synthase from Synechocystis sp. (strain ATCC 27184 / PCC 6803 / Kazusa).